The sequence spans 433 residues: Alpha-(1,3)-fucosyltransferase fut-1 (433 aa).

Topologically, residues 1–12 are cytoplasmic; it reads MTARSIKLFFAR. Residues 13–32 form a helical; Signal-anchor for type II membrane protein membrane-spanning segment; that stretch reads WKYLMFACCITYLLVIYAPI. The Lumenal portion of the chain corresponds to 33–433; it reads SKSEQKDWKE…GTLVDSIPLD (401 aa). Asn-194 and Asn-359 each carry an N-linked (GlcNAc...) asparagine glycan.

Belongs to the glycosyltransferase 10 family. It depends on Mg(2+) as a cofactor. The cofactor is Mn(2+). Post-translationally, N-glycosylated. Glycosylation is important for enzymatic activity. In terms of tissue distribution, expressed in the pharyngeal-intestinal (PI) and anal valves. Expressed in ASG neurons and in one or two neurons in the retrovesicular ganglion and two neurons posterior to the PI valve and PHA and PHB neurons in the tail.

The protein resides in the golgi apparatus. It localises to the golgi stack membrane. It catalyses the reaction N(4)-{beta-D-GlcNAc-(1-&gt;2)-alpha-D-Man-(1-&gt;3)-[beta-D-GlcNAc-(1-&gt;2)-alpha-D-Man-(1-&gt;6)]-beta-D-Man-(1-&gt;4)-beta-D-GlcNAc-(1-&gt;4)-beta-D-GlcNAc}-L-asparaginyl-[protein] + GDP-beta-L-fucose = N(4)-{beta-D-GlcNAc-(1-&gt;2)-alpha-D-Man-(1-&gt;3)-[beta-D-GlcNAc-(1-&gt;2)-alpha-D-Man-(1-&gt;6)]-beta-D-Man-(1-&gt;4)-beta-D-GlcNAc-(1-&gt;4)-[alpha-L-Fuc(1-&gt;3)]-beta-D-GlcNAc}-L-asparaginyl-[protein] + GDP + H(+). It functions in the pathway protein modification; protein glycosylation. Inhibited by Cu(2+) or Zn(2+) and to a lesser extent Ni(2+) ions. In terms of biological role, preferentially catalyzes the addition of fucose in alpha 1-3 linkage to the first GlcNAc residue (with or without alpha 1,6-linked fucose), next to the peptide chains in N-glycans. Unlike in mammals, does not require the prior action of N-acetylglucosaminyltransferase I to generate complex N-glycans. This Caenorhabditis elegans protein is Alpha-(1,3)-fucosyltransferase fut-1.